A 601-amino-acid chain; its full sequence is Serine/threonine-protein phosphatase 2A 65 kDa regulatory subunit A beta isoform (601 aa).

Ala-2 is modified (N-acetylalanine). HEAT repeat units follow at residues 20 to 58 (DSLY…GVER), 59 to 96 (TRSE…GGPD), 97 to 135 (FAHC…TPVA), 136 to 173 (LEAY…ASNA), 174 to 212 (VKAE…ELDS), 213 to 251 (VKSE…SQDD), 252 to 290 (LETL…GPKI), 291 to 333 (TLND…RETI), 334 to 372 (IMNQ…GKEN), 373 to 411 (TIEH…GIRQ), 412 to 450 (LSQS…GVEF), 451 to 489 (FDEK…GTEW), 490 to 528 (AQNT…GQEI), 529 to 567 (TTKQ…DTNA), and 568 to 601 (LQGE…LALA).

The protein belongs to the phosphatase 2A regulatory subunit A family. In terms of assembly, PP2A consists of a common heterodimeric core enzyme, composed of a 36 kDa catalytic subunit (subunit C) and a 65 kDa constant regulatory subunit (PR65 or subunit A), that associates with a variety of regulatory subunits. Proteins that associate with the core dimer include three families of regulatory subunits B (the R2/B/PR55/B55, R3/B''/PR72/PR130/PR59 and R5/B'/B56 families), the 48 kDa variable regulatory subunit, viral proteins, and cell signaling molecules. Interacts with IPO9. Interacts with SGO1. Interacts with RAF1.

Functionally, the PR65 subunit of protein phosphatase 2A serves as a scaffolding molecule to coordinate the assembly of the catalytic subunit and a variable regulatory B subunit. In Homo sapiens (Human), this protein is Serine/threonine-protein phosphatase 2A 65 kDa regulatory subunit A beta isoform (PPP2R1B).